Reading from the N-terminus, the 486-residue chain is ATP synthase subunit beta (486 aa).

167–174 lines the ATP pocket; it reads GGAGVGKT.

The protein belongs to the ATPase alpha/beta chains family. As to quaternary structure, F-type ATPases have 2 components, CF(1) - the catalytic core - and CF(0) - the membrane proton channel. CF(1) has five subunits: alpha(3), beta(3), gamma(1), delta(1), epsilon(1). CF(0) has three main subunits: a(1), b(2) and c(9-12). The alpha and beta chains form an alternating ring which encloses part of the gamma chain. CF(1) is attached to CF(0) by a central stalk formed by the gamma and epsilon chains, while a peripheral stalk is formed by the delta and b chains.

It is found in the cell inner membrane. The enzyme catalyses ATP + H2O + 4 H(+)(in) = ADP + phosphate + 5 H(+)(out). Functionally, produces ATP from ADP in the presence of a proton gradient across the membrane. The catalytic sites are hosted primarily by the beta subunits. This Anaplasma marginale (strain St. Maries) protein is ATP synthase subunit beta.